The primary structure comprises 42 residues: Photosystem I reaction center subunit IX (42 aa).

A helical transmembrane segment spans residues Y7 to I27.

Belongs to the PsaJ family.

The protein localises to the plastid. It is found in the chloroplast thylakoid membrane. Its function is as follows. May help in the organization of the PsaE and PsaF subunits. This Daucus carota (Wild carrot) protein is Photosystem I reaction center subunit IX.